Here is a 148-residue protein sequence, read N- to C-terminus: 3-dehydroquinate dehydratase (148 aa).

The substrate site is built by Asn74, His80, and Asp87. The active-site Proton donor is His100. Residues 101–102 and Arg111 each bind substrate; that span reads LS.

The protein belongs to the type-II 3-dehydroquinase family. In terms of assembly, homododecamer.

It catalyses the reaction 3-dehydroquinate = 3-dehydroshikimate + H2O. It participates in metabolic intermediate biosynthesis; chorismate biosynthesis; chorismate from D-erythrose 4-phosphate and phosphoenolpyruvate: step 3/7. The chain is 3-dehydroquinate dehydratase (yqhS) from Bacillus subtilis (strain 168).